The sequence spans 262 residues: Putative outer membrane protein CPn_1034/CP_0818/CPj1034/CpB1074 (262 aa).

The signal sequence occupies residues 1–17; sequence MKTWLFFTFLFSCSSFY.

Its subcellular location is the cell outer membrane. The chain is Putative outer membrane protein CPn_1034/CP_0818/CPj1034/CpB1074 from Chlamydia pneumoniae (Chlamydophila pneumoniae).